Reading from the N-terminus, the 601-residue chain is RNA-binding protein MEX3B (601 aa).

Disordered stretches follow at residues 1–39 (MPSS…DDQR) and 90–109 (GRQG…ISPT). Position 4 is a phosphoserine (Ser4). Residues 13 to 33 (GSGGGGGGGGGGGGGGSGGGE) are compositionally biased toward gly residues. 2 KH domains span residues 98-159 (DGDR…RREI) and 192-253 (QTTI…REEI). 2 disordered regions span residues 284-332 (LHHG…TDSY) and 344-448 (TSRL…GGAS). Ser320 bears the Phosphoserine mark. 2 stretches are compositionally biased toward low complexity: residues 320-331 (SSSSLGSASTDS) and 362-371 (NGNNNNNGNG). Positions 395 to 404 (DPAPAPPPGT) are enriched in pro residues. Residues 420–442 (AAPVSSSCSSSASSSASSSSVVF) are compositionally biased toward low complexity. The residue at position 494 (Ser494) is a Phosphoserine. The interval 514-546 (LPGLPSSDTSGSSSSSSSSSSSSSSSSGLRRKG) is disordered. Residues 519-540 (SSDTSGSSSSSSSSSSSSSSSS) show a composition bias toward low complexity. Residues 550–590 (CSVCFESEVIAALVPCGHNLFCMECANRICEKSEPECPVCH) form an RING-type zinc finger.

Post-translationally, phosphorylation at Ser-494 creates a docking site for 14-3-3, which stabilizes the protein and modulates its ability to bind RNA.

It localises to the cytoplasm. Its subcellular location is the nucleus. The protein resides in the P-body. It is found in the cytoplasmic granule. Its function is as follows. RNA-binding protein. May be involved in post-transcriptional regulatory mechanisms. The polypeptide is RNA-binding protein MEX3B (Mex3b) (Mus musculus (Mouse)).